An 875-amino-acid chain; its full sequence is Lysine-specific demethylase 7A (875 aa).

The PHD-type zinc-finger motif lies at 5 to 56 (PLYCVCRQPYDVNRFMIECDICKDWFHGSCVQVVEHHAADIDVYHCPNCEPI). The 157-residue stretch at 197-353 (FSDTRMSNLV…MQLRCYEMER (157 aa)) folds into the JmjC domain. A substrate-binding site is contributed by T246. Residues H249 and D251 each coordinate Fe cation. Residue K266 participates in substrate binding. Residue H321 participates in Fe cation binding. Disordered stretches follow at residues 442–506 (EDDS…SRKL), 629–710 (SQGE…NTDC), and 742–820 (QGNG…ATAK). A compositionally biased stretch (polar residues) spans 448 to 462 (AVKTQGSAECSLSRS). Residues 478 to 505 (QDHHHHRRRHHHHHHHHHHHHHHHHSRK) are compositionally biased toward basic residues. The span at 650–663 (SDSKAGDSAEKCSL) shows a compositional bias: basic and acidic residues. Basic residues predominate over residues 688–697 (SHRHSHHKQA). The segment covering 742 to 762 (QGNGSSTSSSSDMWDSSEPCS) has biased composition (low complexity).

Belongs to the JHDM1 histone demethylase family. JHDM1D subfamily. Fe(2+) serves as cofactor. Predominantly expressed in brain.

It is found in the nucleus. Its function is as follows. Histone demethylase required for brain development. Specifically demethylates dimethylated 'Lys-9' and 'Lys-27' (H3K9me2 and H3K27me2, respectively) of histone H3 and monomethylated histone H4 'Lys-20' residue (H4K20Me1), thereby playing a central role in histone code. The polypeptide is Lysine-specific demethylase 7A (kdm7a) (Danio rerio (Zebrafish)).